Reading from the N-terminus, the 89-residue chain is Defensin-like protein 147 (89 aa).

Residues 1–24 form the signal peptide; that stretch reads MKKIFQLSFTVFIIFISLVLGVVG. Intrachain disulfides connect C34-C82, C46-C66, C51-C79, and C55-C81.

Belongs to the DEFL family. As to expression, expressed in flower buds, but not in stems, roots or rosette leaves.

Its subcellular location is the secreted. The sequence is that of Defensin-like protein 147 (LCR1) from Arabidopsis thaliana (Mouse-ear cress).